Here is a 501-residue protein sequence, read N- to C-terminus: Zinc finger protein 704 (501 aa).

The span at 80-96 (SLKSTCNGGQRDGLTQG) shows a compositional bias: polar residues. Disordered regions lie at residues 80–138 (SLKS…HTRS), 183–203 (PLVRSPPVKVSEGLNGSWKDG), and 216–267 (WSWS…LFDE). The span at 115–137 (EEPRVLEHKRTGRALETEKDHTR) shows a compositional bias: basic and acidic residues. The C2H2-type zinc-finger motif lies at 281 to 306 (FKCLWKNCGKVLSTAAGIQRHIRTVH). 4 disordered regions span residues 340–380 (SLSP…SRSA), 398–419 (PVTIPSTSSTGFTPSSSSFSIS), 427–446 (FTGTSASPTHSRTQGFGEQH), and 453–472 (LSSPPRAAGSLSRKSRGEGK). The span at 368–380 (SESSSSTPLSRSA) shows a compositional bias: low complexity. Residues 472–476 (KKCRK) carry the CR1 motif. The short motif at 490 to 494 (CRWKK) is the CR2 element.

It localises to the nucleus. In terms of biological role, transcription factor. This Danio rerio (Zebrafish) protein is Zinc finger protein 704 (znf704).